A 90-amino-acid chain; its full sequence is MEIAVEREEENYLELRIQGEDHTLGNLIAGRLRSVKGVILATYYLPHPLKDELVIKIKTDGTISPREALNRAIEDVKVLGESFLDELEQV.

The protein belongs to the archaeal Rpo11/eukaryotic RPB11/RPC19 RNA polymerase subunit family. As to quaternary structure, part of the RNA polymerase complex.

It is found in the cytoplasm. It carries out the reaction RNA(n) + a ribonucleoside 5'-triphosphate = RNA(n+1) + diphosphate. In terms of biological role, DNA-dependent RNA polymerase (RNAP) catalyzes the transcription of DNA into RNA using the four ribonucleoside triphosphates as substrates. This is DNA-directed RNA polymerase subunit Rpo11 from Metallosphaera sedula (strain ATCC 51363 / DSM 5348 / JCM 9185 / NBRC 15509 / TH2).